A 347-amino-acid polypeptide reads, in one-letter code: Protein PET130 (347 aa).

It is found in the mitochondrion matrix. The protein is Protein PET130 (PET130) of Saccharomyces cerevisiae (strain ATCC 204508 / S288c) (Baker's yeast).